We begin with the raw amino-acid sequence, 230 residues long: Ribosome maturation factor RimM (230 aa).

In terms of domain architecture, PRC barrel spans 149–230 (ADEFYWVDLI…RVVVDWEADY (82 aa)).

The protein belongs to the RimM family. In terms of assembly, binds ribosomal protein uS19.

The protein resides in the cytoplasm. Functionally, an accessory protein needed during the final step in the assembly of 30S ribosomal subunit, possibly for assembly of the head region. Essential for efficient processing of 16S rRNA. May be needed both before and after RbfA during the maturation of 16S rRNA. It has affinity for free ribosomal 30S subunits but not for 70S ribosomes. In Burkholderia mallei (strain NCTC 10229), this protein is Ribosome maturation factor RimM.